Reading from the N-terminus, the 306-residue chain is Heterogeneous nuclear ribonucleoproteins C1/C2 (306 aa).

N-acetylalanine is present on Ala2. Residues Lys8, Lys50, Lys89, and Lys94 each participate in a glycyl lysine isopeptide (Lys-Gly) (interchain with G-Cter in SUMO2) cross-link. Residues 16 to 87 (SRVFIGNLNT…QVLDINLAAE (72 aa)) enclose the RRM domain. A phosphoserine mark is found at Ser107 and Val108. Thr109 is modified (phosphothreonine). Phosphoserine is present on residues Ser113, Ser115, and Ser121. 2 disordered regions span residues 139 to 190 (YPAR…KLKG) and 221 to 306 (QSKQ…EDDS). The Nuclear localization signal signature appears at 155 to 161 (PSKRQRV). Phosphoserine is present on residues Ser162 and Ser166. A compositionally biased stretch (low complexity) spans 175 to 185 (SKSGQRGSSKS). Lys176 carries the post-translational modification N6-acetyllysine; alternate. A Glycyl lysine isopeptide (Lys-Gly) (interchain with G-Cter in SUMO2); alternate cross-link involves residue Lys176. Residues 190–238 (GDDLQAIKKELTQIKQKVDSLLENLEKIEKEQSKQAVEMKNDKSEEEQS) adopt a coiled-coil conformation. Basic and acidic residues predominate over residues 221-232 (QSKQAVEMKNDK). Residues Lys223 and Lys229 each participate in a glycyl lysine isopeptide (Lys-Gly) (interchain with G-Cter in SUMO2) cross-link. Lys232 participates in a covalent cross-link: Glycyl lysine isopeptide (Lys-Gly) (interchain with G-Cter in SUMO2); alternate. Lys232 participates in a covalent cross-link: Glycyl lysine isopeptide (Lys-Gly) (interchain with G-Cter in SUMO1); alternate. A phosphoserine mark is found at Ser233, Ser238, Ser239, and Ser241. The segment covering 242–253 (VKKDETNVKMES) has biased composition (basic and acidic residues). Glycyl lysine isopeptide (Lys-Gly) (interchain with G-Cter in SUMO2) cross-links involve residues Lys243 and Lys244. Lys250 is covalently cross-linked (Glycyl lysine isopeptide (Lys-Gly) (interchain with G-Cter in SUMO2); alternate). A Glycyl lysine isopeptide (Lys-Gly) (interchain with G-Cter in SUMO); alternate cross-link involves residue Lys250. Phosphoserine is present on residues Ser253 and Ser260. A compositionally biased stretch (acidic residues) spans 255-276 (GGADDSAEEGDLLDDDDNEDRG). Basic and acidic residues predominate over residues 277–287 (DDQLELIKDDE). Positions 288–306 (KEAEEGEDDRDSANGEDDS) are enriched in acidic residues. Residues Ser299 and Ser306 each carry the phosphoserine modification.

Belongs to the RRM HNRPC family. RALY subfamily. In terms of assembly, tetramer composed of 3 copies of isoform C1 and 1 copy of isoform C2. Assembly of 3 tetramers with bound pre-mRNA gives rise to a 19S complex that interacts with HNRNPA2B1 tetramers. Component of the 40S hnRNP particle. Identified in the spliceosome C complex. Interacts with IGF2BP1. Interacts with DHX9; this interaction is direct, enhanced probably by their concomitant binding to RNA and mediates the attachment to actin filaments. Interacts with PPIA/CYPA. Interacts with YWHAE. Post-translationally, phosphorylated on Ser-260 and Ser-299 in resting cells. Phosphorylated on Ser-253 and on 1 serine residue in the poly-Ser stretch at position 238 in response to hydrogen peroxide. Sumoylated. Sumoylation reduces affinity for mRNA. In terms of processing, ubiquitinated and degraded after nucleo-cytoplasmic transport by YWHAE.

It is found in the nucleus. In terms of biological role, binds pre-mRNA and nucleates the assembly of 40S hnRNP particles. Interacts with poly-U tracts in the 3'-UTR or 5'-UTR of mRNA and modulates the stability and the level of translation of bound mRNA molecules. Single HNRNPC tetramers bind 230-240 nucleotides. Trimers of HNRNPC tetramers bind 700 nucleotides. May play a role in the early steps of spliceosome assembly and pre-mRNA splicing. N6-methyladenosine (m6A) has been shown to alter the local structure in mRNAs and long non-coding RNAs (lncRNAs) via a mechanism named 'm(6)A-switch', facilitating binding of HNRNPC, leading to regulation of mRNA splicing. The polypeptide is Heterogeneous nuclear ribonucleoproteins C1/C2 (HNRNPC) (Homo sapiens (Human)).